The sequence spans 118 residues: uncharacterized protein (118 aa).

Residues Met1–Ser49 are disordered. The segment covering Lys11 to Ser25 has biased composition (basic residues). Residues Lys26–Leu43 are compositionally biased toward basic and acidic residues.

This is an uncharacterized protein from Schizosaccharomyces pombe (strain 972 / ATCC 24843) (Fission yeast).